Here is a 175-residue protein sequence, read N- to C-terminus: ATP-dependent protease subunit HslV (175 aa).

The active site involves Thr5. Na(+)-binding residues include Gly160, Asp163, and Thr166.

This sequence belongs to the peptidase T1B family. HslV subfamily. A double ring-shaped homohexamer of HslV is capped on each side by a ring-shaped HslU homohexamer. The assembly of the HslU/HslV complex is dependent on binding of ATP.

The protein resides in the cytoplasm. The catalysed reaction is ATP-dependent cleavage of peptide bonds with broad specificity.. With respect to regulation, allosterically activated by HslU binding. Protease subunit of a proteasome-like degradation complex believed to be a general protein degrading machinery. The chain is ATP-dependent protease subunit HslV from Myxococcus xanthus.